Reading from the N-terminus, the 215-residue chain is MRAFTQHQGTVAPMDRSNVDTDMIIPKQFLKSIKRTGFGPNLFDELRYLDEGKPDQDCSNRPLNPDFVLNQDRYKNASVLLARTNFGCGSSREHAPWALDDFGFRVIIAPSFADIFYNNCFKNGLLPIVLDEKVVDRLFRETEENEGYQLTVDLEAKTVTTPGGESFSFEVDDFRRHCLLNGLDDIGVTLEDADTIRAYEESRRKTAPWLFNTGN.

The protein belongs to the LeuD family. LeuD type 1 subfamily. As to quaternary structure, heterodimer of LeuC and LeuD.

The catalysed reaction is (2R,3S)-3-isopropylmalate = (2S)-2-isopropylmalate. Its pathway is amino-acid biosynthesis; L-leucine biosynthesis; L-leucine from 3-methyl-2-oxobutanoate: step 2/4. Its function is as follows. Catalyzes the isomerization between 2-isopropylmalate and 3-isopropylmalate, via the formation of 2-isopropylmaleate. This chain is 3-isopropylmalate dehydratase small subunit, found in Marinobacter nauticus (strain ATCC 700491 / DSM 11845 / VT8) (Marinobacter aquaeolei).